Consider the following 123-residue polypeptide: Fluoride-specific ion channel FluC (123 aa).

4 helical membrane-spanning segments follow: residues 1 to 21 (MQWL…GWLA), 32 to 52 (LGTL…LVWF), 66 to 86 (FVIT…AEVF), and 94 to 114 (LLAA…ATAL). Na(+)-binding residues include Gly-73 and Thr-76.

It belongs to the fluoride channel Fluc/FEX (TC 1.A.43) family.

The protein localises to the cell inner membrane. It carries out the reaction fluoride(in) = fluoride(out). Na(+) is not transported, but it plays an essential structural role and its presence is essential for fluoride channel function. Functionally, fluoride-specific ion channel. Important for reducing fluoride concentration in the cell, thus reducing its toxicity. This Psychrobacter arcticus (strain DSM 17307 / VKM B-2377 / 273-4) protein is Fluoride-specific ion channel FluC.